The primary structure comprises 360 residues: Nucleoporin SEH1 (360 aa).

WD repeat units lie at residues 10 to 49 (DHKD…DWHC), 55 to 96 (THSG…SNDK), 111 to 152 (DSRT…NLSQ), 160 to 210 (SCKL…RKYA), 217 to 258 (TVTD…KELT), and 276 to 315 (NHNS…NWKC). Lysine 12 participates in a covalent cross-link: Glycyl lysine isopeptide (Lys-Gly) (interchain with G-Cter in SUMO2). Residues serine 179 and serine 190 each carry the phosphoserine modification. The segment covering 324–354 (SPVNGSSQQGTSNPSLGSNIPSLQNSLNGSS) has biased composition (polar residues). Residues 324–360 (SPVNGSSQQGTSNPSLGSNIPSLQNSLNGSSAGRKHS) are disordered.

The protein belongs to the WD repeat SEC13 family. As to quaternary structure, component of the Nup107-160 subcomplex of the nuclear pore complex (NPC). The Nup107-160 subcomplex includes NUP160, NUP133, NUP107, NUP98, NUP85, NUP43, NUP37, SEH1 and SEC13. The SEH1 subunit appears to be only weakly associated with the Nup107-160 subcomplex. Component of the GATOR2 subcomplex, composed of MIOS, SEC13, SEH1L, WDR24 and WDR59. The GATOR2 complex interacts with CASTOR1 and CASTOR2; the interaction is negatively regulated by arginine. The GATOR2 complex interacts with SESN1, SESN2 and SESN3; the interaction is negatively regulated by amino acids. SESN1, SESN2 and SESN3 convey leucine availability via direct interaction with SEH1L and WDR24.

The protein resides in the chromosome. Its subcellular location is the centromere. The protein localises to the kinetochore. It localises to the nucleus. It is found in the nuclear pore complex. The protein resides in the lysosome membrane. The GATOR2 complex is negatively regulated by the upstream amino acid sensors CASTOR1 and SESN2, which sequester the GATOR2 complex in absence of amino acids. In the presence of abundant amino acids, GATOR2 is released from CASTOR1 and SESN2 and activated. Its function is as follows. Component of the Nup107-160 subcomplex of the nuclear pore complex (NPC). The Nup107-160 subcomplex is required for the assembly of a functional NPC. The Nup107-160 subcomplex is also required for normal kinetochore microtubule attachment, mitotic progression and chromosome segregation. This subunit plays a role in recruitment of the Nup107-160 subcomplex to the kinetochore. As a component of the GATOR2 complex, functions as an activator of the amino acid-sensing branch of the mTORC1 signaling pathway. The GATOR2 complex indirectly activates mTORC1 through the inhibition of the GATOR1 subcomplex. GATOR2 probably acts as an E3 ubiquitin-protein ligase toward GATOR1. In the presence of abundant amino acids, the GATOR2 complex mediates ubiquitination of the NPRL2 core component of the GATOR1 complex, leading to GATOR1 inactivation. In the absence of amino acids, GATOR2 is inhibited, activating the GATOR1 complex. Within the GATOR2 complex, SEC13 and SEH1L are required to stabilize the complex. The chain is Nucleoporin SEH1 (SEH1L) from Pongo abelii (Sumatran orangutan).